The chain runs to 396 residues: Deoxyguanosinetriphosphate triphosphohydrolase-like protein (396 aa).

Residues 62-198 enclose the HD domain; sequence RLTHSLEVAQ…AALADDIAYN (137 aa).

The protein belongs to the dGTPase family. Type 2 subfamily.

The sequence is that of Deoxyguanosinetriphosphate triphosphohydrolase-like protein from Jannaschia sp. (strain CCS1).